The following is a 434-amino-acid chain: Glutamate-1-semialdehyde 2,1-aminomutase 1 (434 aa).

Lys270 is modified (N6-(pyridoxal phosphate)lysine).

It belongs to the class-III pyridoxal-phosphate-dependent aminotransferase family. HemL subfamily. As to quaternary structure, homodimer. Requires pyridoxal 5'-phosphate as cofactor.

The protein localises to the cytoplasm. The catalysed reaction is (S)-4-amino-5-oxopentanoate = 5-aminolevulinate. The protein operates within porphyrin-containing compound metabolism; protoporphyrin-IX biosynthesis; 5-aminolevulinate from L-glutamyl-tRNA(Glu): step 2/2. This Bacillus cereus (strain AH187) protein is Glutamate-1-semialdehyde 2,1-aminomutase 1.